The primary structure comprises 126 residues: Small ribosomal subunit protein eS6 (126 aa).

It belongs to the eukaryotic ribosomal protein eS6 family.

The protein is Small ribosomal subunit protein eS6 of Thermococcus sibiricus (strain DSM 12597 / MM 739).